A 1913-amino-acid polypeptide reads, in one-letter code: Protein TIC 214 (1913 aa).

The next 5 helical transmembrane spans lie at 18 to 38, 64 to 84, 124 to 144, 172 to 192, and 214 to 234; these read IINS…FSIG, FITG…HLAL, LSIQ…HLML, VGWL…VSWI, and LKSA…VNYL. Disordered regions lie at residues 245–330, 707–734, and 1605–1652; these read KLNE…ETEE, YTDK…NSDT, and EKED…RKKK. Basic and acidic residues predominate over residues 260–289; sequence KESQKSKESEEERDVEKETTSETKETKQEQ. Residues 303–314 are compositionally biased toward acidic residues; it reads EKEDPDKIDETE. Over residues 315 to 330 the composition is skewed to basic and acidic residues; that stretch reads EIRVNGKEKKKDETEE. Over residues 718-729 the composition is skewed to low complexity; it reads PNPNTDNTTTEN.

It belongs to the TIC214 family. In terms of assembly, part of the Tic complex.

Its subcellular location is the plastid. It localises to the chloroplast inner membrane. In terms of biological role, involved in protein precursor import into chloroplasts. May be part of an intermediate translocation complex acting as a protein-conducting channel at the inner envelope. In Acorus calamus var. americanus (American sweet flag), this protein is Protein TIC 214.